Here is a 335-residue protein sequence, read N- to C-terminus: NmrA-like family domain-containing oxidoreductase lnbB (335 aa).

NADP(+)-binding positions include G14 to Q18, R41 to S45, D62 to G63, T83 to S85, K142, and Y166 to Q169.

This sequence belongs to the NmrA-type oxidoreductase family.

It functions in the pathway secondary metabolite biosynthesis. Functionally, nmrA-like family domain-containing oxidoreductase; part of the lnb gene cluster that mediates the biosynthesis of diastereomeric piperazines. Lna and lnb clusters encode sets of enzymes that produce overlapping sets of previously undescribed metabolites such as piperazinomycin-like metabolites or morpholine. The lna and lnb biosynthetic pathways appear to be part of a signaling network that controls the formation of sclerotia, a resilient overwintering structure. One primary function of the non-canonical nonribosomal peptide synthetases lnaA and lnbA consists in the reduction of L-tyrosine. The presence in the clusters of tailoring enzymes such as the oxidoreductases lnaB, lnbB, lnaE or lnbE, as well as of the cytochrome P450 monooxygenases lnaC, lnaD, or lnbC, might explain formation of various diastereomeric piperazines. The chain is NmrA-like family domain-containing oxidoreductase lnbB from Aspergillus flavus (strain ATCC 200026 / FGSC A1120 / IAM 13836 / NRRL 3357 / JCM 12722 / SRRC 167).